The primary structure comprises 419 residues: L-rhamnose isomerase (419 aa).

Residues His-262, Asp-294, and Asp-296 each coordinate Mn(2+).

The protein belongs to the rhamnose isomerase family. As to quaternary structure, homotetramer. The cofactor is Mn(2+).

Its subcellular location is the cytoplasm. It catalyses the reaction L-rhamnopyranose = L-rhamnulose. The protein operates within carbohydrate degradation; L-rhamnose degradation; glycerone phosphate from L-rhamnose: step 1/3. Its function is as follows. Catalyzes the interconversion of L-rhamnose and L-rhamnulose. The chain is L-rhamnose isomerase from Escherichia coli O157:H7.